The following is a 159-amino-acid chain: Protein-export protein SecB (159 aa).

Belongs to the SecB family. As to quaternary structure, homotetramer, a dimer of dimers. One homotetramer interacts with 1 SecA dimer.

The protein resides in the cytoplasm. Functionally, one of the proteins required for the normal export of preproteins out of the cell cytoplasm. It is a molecular chaperone that binds to a subset of precursor proteins, maintaining them in a translocation-competent state. It also specifically binds to its receptor SecA. This is Protein-export protein SecB from Aromatoleum aromaticum (strain DSM 19018 / LMG 30748 / EbN1) (Azoarcus sp. (strain EbN1)).